The chain runs to 274 residues: Exosome complex component RRP40 (274 aa).

Ala2 is modified (N-acetylalanine). Residue Lys150 forms a Glycyl lysine isopeptide (Lys-Gly) (interchain with G-Cter in SUMO2) linkage.

Belongs to the RRP40 family. As to quaternary structure, component of the RNA exosome core complex (Exo-9), composed of EXOSC1, EXOSC2, EXOSC3, EXOSC4, EXOSC5, EXOSC6, EXOSC7, EXOSC8 and EXOSC9; within the complex interacts with EXOSC5 and EXOSC9. The catalytically inactive RNA exosome core complex (Exo-9) associates with the catalytic subunit EXOSC10/RRP6. Exo-9 may associate with DIS3 to form the nucleolar exosome complex, or DIS3L to form the cytoplasmic exosome complex. Exo-9 is formed by a hexameric base ring consisting of the heterodimers EXOSC4-EXOSC9, EXOSC5-EXOSC8 and EXOSC6-EXOSC7, and a cap ring consisting of EXOSC1, EXOSC2 and EXOSC3. The RNA exosome complex associates with cofactors C1D/RRP47, MPHOSPH6/MPP6 and MTREX/MTR4. Interacts with MPHOSPH6/MPP6; the interaction is direct. Interacts with GTPBP1. Interacts with ZC3HAV1. Interacts with DDX17 only in the presence of ZC3HAV1 in an RNA-independent manner. Interacts with DHX36; this interaction occurs in a RNase-insensitive manner. Interacts with HBS1L isoform 2.

It is found in the cytoplasm. It localises to the nucleus. Its subcellular location is the nucleolus. Its function is as follows. Non-catalytic component of the RNA exosome complex which has 3'-&gt;5' exoribonuclease activity and participates in a multitude of cellular RNA processing and degradation events. In the nucleus, the RNA exosome complex is involved in proper maturation of stable RNA species such as rRNA, snRNA and snoRNA, in the elimination of RNA processing by-products and non-coding 'pervasive' transcripts, such as antisense RNA species and promoter-upstream transcripts (PROMPTs), and of mRNAs with processing defects, thereby limiting or excluding their export to the cytoplasm. The RNA exosome may be involved in Ig class switch recombination (CSR) and/or Ig variable region somatic hypermutation (SHM) by targeting AICDA deamination activity to transcribed dsDNA substrates. In the cytoplasm, the RNA exosome complex is involved in general mRNA turnover and specifically degrades inherently unstable mRNAs containing AU-rich elements (AREs) within their 3' untranslated regions, and in RNA surveillance pathways, preventing translation of aberrant mRNAs. It seems to be involved in degradation of histone mRNA. The catalytic inactive RNA exosome core complex of 9 subunits (Exo-9) is proposed to play a pivotal role in the binding and presentation of RNA for ribonucleolysis, and to serve as a scaffold for the association with catalytic subunits and accessory proteins or complexes. EXOSC3 as peripheral part of the Exo-9 complex stabilizes the hexameric ring of RNase PH-domain subunits through contacts with EXOSC9 and EXOSC5. The sequence is that of Exosome complex component RRP40 (Exosc3) from Mus musculus (Mouse).